We begin with the raw amino-acid sequence, 412 residues long: Gamma-glutamyl phosphate reductase (412 aa).

It belongs to the gamma-glutamyl phosphate reductase family.

Its subcellular location is the cytoplasm. The enzyme catalyses L-glutamate 5-semialdehyde + phosphate + NADP(+) = L-glutamyl 5-phosphate + NADPH + H(+). It participates in amino-acid biosynthesis; L-proline biosynthesis; L-glutamate 5-semialdehyde from L-glutamate: step 2/2. In terms of biological role, catalyzes the NADPH-dependent reduction of L-glutamate 5-phosphate into L-glutamate 5-semialdehyde and phosphate. The product spontaneously undergoes cyclization to form 1-pyrroline-5-carboxylate. The sequence is that of Gamma-glutamyl phosphate reductase from Lactiplantibacillus plantarum (strain ATCC BAA-793 / NCIMB 8826 / WCFS1) (Lactobacillus plantarum).